The chain runs to 184 residues: Zinc metalloproteinase-disintegrin-like ammodytagin (184 aa).

The region spanning 1 to 90 (KSAAXVTLDL…CPAKCIDNKP (90 aa)) is the Peptidase M12B domain. Position 20 (Asp-20) interacts with Ca(2+). His-64 contributes to the Zn(2+) binding site. Residue Glu-65 is part of the active site. 2 residues coordinate Zn(2+): His-68 and His-74. 5 residues coordinate Ca(2+): Asn-88, Val-100, Asn-103, Phe-105, and Glu-107. The Disintegrin domain occupies 98–124 (PAVCGNYFVELTPGSQCADGVCCDQCR). 2 disulfide bridges follow: Cys-114–Cys-120 and Cys-165–Cys-177.

The protein belongs to the venom metalloproteinase (M12B) family. P-III subfamily. P-IIIc sub-subfamily. In terms of assembly, heterodimer; disulfide-linked. It depends on Zn(2+) as a cofactor. The N-terminus is blocked. Post-translationally, N-glycosylated. In terms of tissue distribution, expressed by the venom gland.

It is found in the secreted. Its activity is regulated as follows. Inhibited by EDTA, DTT and zinc ions. Partially inhibited by L-cysteine. Not inhibited by 2-propanol or PMSF. Activity is enhanced by calcium or magnesium ions. Snake venom zinc metalloprotease that has fibrinogenolytic and hemorrhagic activities in mouse and rats. Hydrolyzes the Aalpha-chain (FGA) and more slowly the Bbeta-chain of fibrinogen (FGB), without affecting the gamma-chain. Its hemorrhagic activity results of its involvement in cleavage of basal membrane components (nidogen and fibronectin but not laminin) and depletion of fibrinogen, prothrombin (F2) and factor X (F10) in blood circulation. Also possess potent azocaseinolytic activity and cleaves insulin B-chain, hydrolyzing it at positions Gln(4)-His(5), His(10)-Leu(11) and Tyr(16)-Leu(17). In Vipera ammodytes ammodytes (Western sand viper), this protein is Zinc metalloproteinase-disintegrin-like ammodytagin.